The primary structure comprises 525 residues: Chromosomal replication initiator protein DnaA (525 aa).

The segment at 1 to 71 (MNDFWQHCSA…SDLAREFWNT (71 aa)) is domain I, interacts with DnaA modulators. The segment at 71–188 (TPIEVQFVLD…GEADSMYERS (118 aa)) is domain II. Positions 160-182 (AAAGRRTWRPGPGAAPANGGEAD) are disordered. Residues 169 to 181 (PGPGAAPANGGEA) show a composition bias toward low complexity. A domain III, AAA+ region region spans residues 189 to 405 (KLNPVLTFDN…GALRKILAYS (217 aa)). Residues G233, G235, K236, and T237 each contribute to the ATP site. Residues 406–525 (KFHGREISIE…LHVLEQTLKG (120 aa)) form a domain IV, binds dsDNA region.

It belongs to the DnaA family. In terms of assembly, oligomerizes as a right-handed, spiral filament on DNA at oriC.

It is found in the cytoplasm. Functionally, plays an essential role in the initiation and regulation of chromosomal replication. ATP-DnaA binds to the origin of replication (oriC) to initiate formation of the DNA replication initiation complex once per cell cycle. Binds the DnaA box (a 9 base pair repeat at the origin) and separates the double-stranded (ds)DNA. Forms a right-handed helical filament on oriC DNA; dsDNA binds to the exterior of the filament while single-stranded (ss)DNA is stabiized in the filament's interior. The ATP-DnaA-oriC complex binds and stabilizes one strand of the AT-rich DNA unwinding element (DUE), permitting loading of DNA polymerase. After initiation quickly degrades to an ADP-DnaA complex that is not apt for DNA replication. Binds acidic phospholipids. The chain is Chromosomal replication initiator protein DnaA from Burkholderia orbicola (strain MC0-3).